A 234-amino-acid chain; its full sequence is MPFEKSKKILIALDYDDQQAALDFVKQLSPDSCRLKVGKEMFTYFGPAFVKELIDLGFDVFLDLKFHDIPNTVAKAVTAAAKMGVWMVNVHASGGFEMMSKAKQALAPFGDKAPLLIAVTVLTSMDETELKRLGVEKTPQEQVIYLAKLAKEAGLDGVVCSAQEAQQLKAELGAGFKLVTPGIRPVGSDAGDQKRIMTPKQAIDAGSDYLVIGRPITQADNPVAVLADVNKSIE.

Residues D14, K36, 63-72, T123, R184, Q193, G213, and R214 each bind substrate; that span reads DLKFHDIPNT. K65 functions as the Proton donor in the catalytic mechanism.

The protein belongs to the OMP decarboxylase family. Type 1 subfamily. Homodimer.

The catalysed reaction is orotidine 5'-phosphate + H(+) = UMP + CO2. The protein operates within pyrimidine metabolism; UMP biosynthesis via de novo pathway; UMP from orotate: step 2/2. In terms of biological role, catalyzes the decarboxylation of orotidine 5'-monophosphate (OMP) to uridine 5'-monophosphate (UMP). The sequence is that of Orotidine 5'-phosphate decarboxylase from Pseudoalteromonas translucida (strain TAC 125).